A 419-amino-acid chain; its full sequence is Gamma-glutamyl phosphate reductase (419 aa).

Belongs to the gamma-glutamyl phosphate reductase family.

It localises to the cytoplasm. The catalysed reaction is L-glutamate 5-semialdehyde + phosphate + NADP(+) = L-glutamyl 5-phosphate + NADPH + H(+). Its pathway is amino-acid biosynthesis; L-proline biosynthesis; L-glutamate 5-semialdehyde from L-glutamate: step 2/2. Catalyzes the NADPH-dependent reduction of L-glutamate 5-phosphate into L-glutamate 5-semialdehyde and phosphate. The product spontaneously undergoes cyclization to form 1-pyrroline-5-carboxylate. The chain is Gamma-glutamyl phosphate reductase from Gloeobacter violaceus (strain ATCC 29082 / PCC 7421).